Here is a 520-residue protein sequence, read N- to C-terminus: Hydroxymethylglutaryl-CoA synthase, cytoplasmic (520 aa).

Position 4 is a phosphoserine (serine 4). Residues aspartate 43 and alanine 44 each coordinate (3S)-3-hydroxy-3-methylglutaryl-CoA. 44 to 46 (AGK) is a CoA binding site. Position 46 is an N6-acetyllysine (lysine 46). Glutamate 95 acts as the Proton donor/acceptor in catalysis. 5 residues coordinate (3S)-3-hydroxy-3-methylglutaryl-CoA: cysteine 129, asparagine 167, threonine 171, serine 221, and histidine 264. Cysteine 129 acts as the Acyl-thioester intermediate in catalysis. Asparagine 167 serves as a coordination point for CoA. CoA is bound at residue serine 221. Catalysis depends on histidine 264, which acts as the Proton donor/acceptor. Positions 269 and 273 each coordinate CoA. (3S)-3-hydroxy-3-methylglutaryl-CoA contacts are provided by lysine 273, asparagine 343, and serine 377. Lysine 273 bears the N6-acetyllysine mark. The residue at position 476 (threonine 476) is a Phosphothreonine. A disordered region spans residues 492–520 (HIPSPAKKVPRLPATAAEPEAAVISNGEH). A phosphoserine mark is found at serine 495 and serine 516.

The protein belongs to the thiolase-like superfamily. HMG-CoA synthase family. In terms of assembly, homodimer.

The protein resides in the cytoplasm. It carries out the reaction acetoacetyl-CoA + acetyl-CoA + H2O = (3S)-3-hydroxy-3-methylglutaryl-CoA + CoA + H(+). The protein operates within metabolic intermediate biosynthesis; (R)-mevalonate biosynthesis; (R)-mevalonate from acetyl-CoA: step 2/3. Its function is as follows. Catalyzes the condensation of acetyl-CoA with acetoacetyl-CoA to form HMG-CoA, which is converted by HMG-CoA reductase (HMGCR) into mevalonate, a precursor for cholesterol synthesis. This is Hydroxymethylglutaryl-CoA synthase, cytoplasmic from Homo sapiens (Human).